The primary structure comprises 285 residues: K88 fimbrial protein AD (285 aa).

Residues 1-21 (MKKTLIALAIAASAASGMAHA) form the signal peptide.

This sequence belongs to the fimbrial K88 protein family. As to quaternary structure, K88 fimbria, 0.1-1 micrometer in length and 7 nanometers in diameter, is composed of about 100 identical subunits.

It localises to the fimbrium. Its function is as follows. K88 major fimbrial subunit. Fimbriae (also called pili), are polar filaments radiating from the surface of the bacterium to a length of 0.5-1.5 micrometers and numbering 100-300 per cell. They enable bacteria to colonize the epithelium of specific host organs. The protein is K88 fimbrial protein AD (faeG) of Escherichia coli.